The primary structure comprises 361 residues: Glutamate 5-kinase (361 aa).

An ATP-binding site is contributed by Lys-7. Substrate contacts are provided by Ser-47, Asp-134, and Asn-146. ATP-binding positions include 166–167 and 209–215; these read TD and TGGMTTK. One can recognise a PUA domain in the interval 274-345; that stretch reads LGTLQLDEGA…EAIETQMSTN (72 aa).

The protein belongs to the glutamate 5-kinase family.

It is found in the cytoplasm. The enzyme catalyses L-glutamate + ATP = L-glutamyl 5-phosphate + ADP. Its pathway is amino-acid biosynthesis; L-proline biosynthesis; L-glutamate 5-semialdehyde from L-glutamate: step 1/2. Functionally, catalyzes the transfer of a phosphate group to glutamate to form L-glutamate 5-phosphate. This Prochlorococcus marinus (strain MIT 9313) protein is Glutamate 5-kinase.